We begin with the raw amino-acid sequence, 445 residues long: UDP-N-acetylmuramoylalanine--D-glutamate ligase (445 aa).

111 to 117 (GTNGKST) serves as a coordination point for ATP.

This sequence belongs to the MurCDEF family.

The protein resides in the cytoplasm. It carries out the reaction UDP-N-acetyl-alpha-D-muramoyl-L-alanine + D-glutamate + ATP = UDP-N-acetyl-alpha-D-muramoyl-L-alanyl-D-glutamate + ADP + phosphate + H(+). It functions in the pathway cell wall biogenesis; peptidoglycan biosynthesis. In terms of biological role, cell wall formation. Catalyzes the addition of glutamate to the nucleotide precursor UDP-N-acetylmuramoyl-L-alanine (UMA). The polypeptide is UDP-N-acetylmuramoylalanine--D-glutamate ligase (murD) (Rickettsia prowazekii (strain Madrid E)).